A 103-amino-acid polypeptide reads, in one-letter code: Putative membrane protein insertion efficiency factor (103 aa).

The protein belongs to the UPF0161 family.

Its subcellular location is the cell membrane. Its function is as follows. Could be involved in insertion of integral membrane proteins into the membrane. The chain is Putative membrane protein insertion efficiency factor from Clavibacter michiganensis subsp. michiganensis (strain NCPPB 382).